A 215-amino-acid polypeptide reads, in one-letter code: ATP phosphoribosyltransferase (215 aa).

It belongs to the ATP phosphoribosyltransferase family. Short subfamily. As to quaternary structure, heteromultimer composed of HisG and HisZ subunits.

The protein resides in the cytoplasm. It carries out the reaction 1-(5-phospho-beta-D-ribosyl)-ATP + diphosphate = 5-phospho-alpha-D-ribose 1-diphosphate + ATP. The protein operates within amino-acid biosynthesis; L-histidine biosynthesis; L-histidine from 5-phospho-alpha-D-ribose 1-diphosphate: step 1/9. Its function is as follows. Catalyzes the condensation of ATP and 5-phosphoribose 1-diphosphate to form N'-(5'-phosphoribosyl)-ATP (PR-ATP). Has a crucial role in the pathway because the rate of histidine biosynthesis seems to be controlled primarily by regulation of HisG enzymatic activity. This chain is ATP phosphoribosyltransferase, found in Acidithiobacillus ferrooxidans (strain ATCC 23270 / DSM 14882 / CIP 104768 / NCIMB 8455) (Ferrobacillus ferrooxidans (strain ATCC 23270)).